The sequence spans 128 residues: Large ribosomal subunit protein bL17 (128 aa).

It belongs to the bacterial ribosomal protein bL17 family. As to quaternary structure, part of the 50S ribosomal subunit. Contacts protein L32.

The polypeptide is Large ribosomal subunit protein bL17 (Proteus mirabilis (strain HI4320)).